The sequence spans 117 residues: MTDIPPAVSPPPGPEIIDALAAVIASRQGADPATSYTAKLFGRGRGKIVQKFGEEAFEVGVAALVESPEQVVAESADVLYHLMVLWADVGVTPDRVWAELARRFGTSGIDEKAARKK.

It belongs to the PRA-PH family.

The protein localises to the cytoplasm. The catalysed reaction is 1-(5-phospho-beta-D-ribosyl)-ATP + H2O = 1-(5-phospho-beta-D-ribosyl)-5'-AMP + diphosphate + H(+). It functions in the pathway amino-acid biosynthesis; L-histidine biosynthesis; L-histidine from 5-phospho-alpha-D-ribose 1-diphosphate: step 2/9. This Rhodospirillum rubrum (strain ATCC 11170 / ATH 1.1.1 / DSM 467 / LMG 4362 / NCIMB 8255 / S1) protein is Phosphoribosyl-ATP pyrophosphatase.